We begin with the raw amino-acid sequence, 345 residues long: Phosphoribosylformylglycinamidine cyclo-ligase (345 aa).

Belongs to the AIR synthase family.

The protein localises to the cytoplasm. It carries out the reaction 2-formamido-N(1)-(5-O-phospho-beta-D-ribosyl)acetamidine + ATP = 5-amino-1-(5-phospho-beta-D-ribosyl)imidazole + ADP + phosphate + H(+). It participates in purine metabolism; IMP biosynthesis via de novo pathway; 5-amino-1-(5-phospho-D-ribosyl)imidazole from N(2)-formyl-N(1)-(5-phospho-D-ribosyl)glycinamide: step 2/2. This is Phosphoribosylformylglycinamidine cyclo-ligase from Shouchella clausii (strain KSM-K16) (Alkalihalobacillus clausii).